A 442-amino-acid chain; its full sequence is NAD(P)H sulfur oxidoreductase (CoA-dependent) (442 aa).

13-14 lines the FAD pocket; that stretch reads AA. CoA is bound at residue R24. FAD-binding positions include 35–36 and 42–44; these read EA and HAP. CoA is bound by residues 41 to 45, 62 to 63, and R72; these read SHAPC and HY. The active-site Redox-active is the C45. The FAD site is built by V82, D280, and A298. 2 residues coordinate CoA: N302 and K358. An FAD-binding site is contributed by Y422. CoA contacts are provided by W430 and R438.

This sequence belongs to the class-III pyridine nucleotide-disulfide oxidoreductase family. Homodimer. FAD serves as cofactor.

Its subcellular location is the cytoplasm. The enzyme catalyses hydrogen sulfide + NADP(+) = sulfur + NADPH. It catalyses the reaction hydrogen sulfide + NAD(+) = sulfur + NADH. It carries out the reaction NADP(+) + 2 CoA = CoA-disulfide + NADPH + H(+). The catalysed reaction is NAD(+) + 2 CoA = CoA-disulfide + NADH + H(+). In terms of biological role, catalyzes the CoA-dependent reduction of elemental sulfur (S(0)) to produce hydrogen sulfide. Can use both NADPH and NADH, but shows a preference for NADPH. May enable S(0) to be used, via sulfide, for iron-sulfur cluster synthesis by SipA. Also shows coenzyme A disulfide reductase (CoADR) activity with both NADH and NADPH. However, CoADR specific activity is about 20-fold lower than the sulfur reduction assay and CoADR activity appears to be an artifactual side reaction and is not thought to have any physiological relevance. Also shows NAD(P)H oxidase activity with both NADH and NADPH. In Pyrococcus furiosus (strain ATCC 43587 / DSM 3638 / JCM 8422 / Vc1), this protein is NAD(P)H sulfur oxidoreductase (CoA-dependent).